We begin with the raw amino-acid sequence, 473 residues long: Glutamyl-tRNA reductase (473 aa).

Residues 49–52 (TCNR), serine 109, 114–116 (ESQ), and glutamine 120 each bind substrate. Catalysis depends on cysteine 50, which acts as the Nucleophile. The interval 196–215 (LDGGGVAAEGPRHAVTPEPP) is disordered. Position 226 to 231 (226 to 231 (GAGAVG)) interacts with NADP(+).

The protein belongs to the glutamyl-tRNA reductase family. In terms of assembly, homodimer.

It carries out the reaction (S)-4-amino-5-oxopentanoate + tRNA(Glu) + NADP(+) = L-glutamyl-tRNA(Glu) + NADPH + H(+). It participates in porphyrin-containing compound metabolism; protoporphyrin-IX biosynthesis; 5-aminolevulinate from L-glutamyl-tRNA(Glu): step 1/2. In terms of biological role, catalyzes the NADPH-dependent reduction of glutamyl-tRNA(Glu) to glutamate 1-semialdehyde (GSA). This Frankia casuarinae (strain DSM 45818 / CECT 9043 / HFP020203 / CcI3) protein is Glutamyl-tRNA reductase.